Reading from the N-terminus, the 443-residue chain is Chromosomal replication initiator protein DnaA (443 aa).

The segment at 1 to 80 (MFLEEKLNLV…ETCGDKIPVE (80 aa)) is domain I, interacts with DnaA modulators. Residues 80–104 (EILIETKAASPLQSILEKSFDQKDF) form a domain II region. Residues 105–321 (QFNPDYTFET…GALNDIYLYK (217 aa)) are domain III, AAA+ region. Gly-148, Gly-150, Lys-151, and Thr-152 together coordinate ATP. The tract at residues 322-443 (KSYSLLFLNL…ERISSKYKLQ (122 aa)) is domain IV, binds dsDNA.

It belongs to the DnaA family. In terms of assembly, oligomerizes as a right-handed, spiral filament on DNA at oriC.

Its subcellular location is the cytoplasm. Functionally, plays an essential role in the initiation and regulation of chromosomal replication. ATP-DnaA binds to the origin of replication (oriC) to initiate formation of the DNA replication initiation complex once per cell cycle. Binds the DnaA box (a 9 base pair repeat at the origin) and separates the double-stranded (ds)DNA. Forms a right-handed helical filament on oriC DNA; dsDNA binds to the exterior of the filament while single-stranded (ss)DNA is stabiized in the filament's interior. The ATP-DnaA-oriC complex binds and stabilizes one strand of the AT-rich DNA unwinding element (DUE), permitting loading of DNA polymerase. After initiation quickly degrades to an ADP-DnaA complex that is not apt for DNA replication. Binds acidic phospholipids. The protein is Chromosomal replication initiator protein DnaA of Leptospira interrogans serogroup Icterohaemorrhagiae serovar copenhageni (strain Fiocruz L1-130).